The following is a 539-amino-acid chain: CTP synthase (539 aa).

The amidoligase domain stretch occupies residues 1–268; it reads MADTKYIFVT…DETVLRKVGL (268 aa). Serine 15 is a binding site for CTP. Serine 15 is a UTP binding site. 16 to 21 contacts ATP; sequence SLGKGI. Tyrosine 56 lines the L-glutamine pocket. Aspartate 73 provides a ligand contact to ATP. Positions 73 and 143 each coordinate Mg(2+). CTP is bound by residues 150–152, 189–194, and lysine 225; these read DIE and KTKPTQ. UTP contacts are provided by residues 189 to 194 and lysine 225; that span reads KTKPTQ. The 243-residue stretch at 294 to 536 folds into the Glutamine amidotransferase type-1 domain; that stretch reads TIALVGKYVE…IREAIKTRKK (243 aa). Glycine 356 serves as a coordination point for L-glutamine. The Nucleophile; for glutamine hydrolysis role is filled by cysteine 383. L-glutamine is bound by residues 384-387, glutamate 407, and arginine 464; that span reads LGMQ. Residues histidine 509 and glutamate 511 contribute to the active site.

It belongs to the CTP synthase family. As to quaternary structure, homotetramer.

It catalyses the reaction UTP + L-glutamine + ATP + H2O = CTP + L-glutamate + ADP + phosphate + 2 H(+). The enzyme catalyses L-glutamine + H2O = L-glutamate + NH4(+). The catalysed reaction is UTP + NH4(+) + ATP = CTP + ADP + phosphate + 2 H(+). It functions in the pathway pyrimidine metabolism; CTP biosynthesis via de novo pathway; CTP from UDP: step 2/2. With respect to regulation, allosterically activated by GTP, when glutamine is the substrate; GTP has no effect on the reaction when ammonia is the substrate. The allosteric effector GTP functions by stabilizing the protein conformation that binds the tetrahedral intermediate(s) formed during glutamine hydrolysis. Inhibited by the product CTP, via allosteric rather than competitive inhibition. Catalyzes the ATP-dependent amination of UTP to CTP with either L-glutamine or ammonia as the source of nitrogen. Regulates intracellular CTP levels through interactions with the four ribonucleotide triphosphates. This chain is CTP synthase, found in Porphyromonas gingivalis (strain ATCC BAA-308 / W83).